The following is a 452-amino-acid chain: UDP-glycosyltransferase 79B11 (452 aa).

UDP-alpha-D-glucose is bound by residues serine 260, 319–325 (VQQPSWQ), 340–348 (HCGFGSMWE), and 362–365 (LNDQ).

This sequence belongs to the UDP-glycosyltransferase family.

The protein is UDP-glycosyltransferase 79B11 (UGT79B11) of Arabidopsis thaliana (Mouse-ear cress).